The chain runs to 433 residues: Pyrimidine-nucleoside phosphorylase (433 aa).

81–83 (KHS) contacts phosphate. 2 residues coordinate K(+): Gly-88 and Thr-90. Phosphate is bound by residues Thr-92, 108-110 (KMS), and Thr-120. Positions 168 and 187 each coordinate substrate. K(+) is bound by residues Leu-243, Ala-246, and Glu-255.

This sequence belongs to the thymidine/pyrimidine-nucleoside phosphorylase family. As to quaternary structure, homodimer. K(+) serves as cofactor.

The catalysed reaction is uridine + phosphate = alpha-D-ribose 1-phosphate + uracil. The enzyme catalyses thymidine + phosphate = 2-deoxy-alpha-D-ribose 1-phosphate + thymine. It carries out the reaction 2'-deoxyuridine + phosphate = 2-deoxy-alpha-D-ribose 1-phosphate + uracil. In terms of biological role, catalyzes phosphorolysis of the pyrimidine nucleosides uridine, thymidine and 2'-deoxyuridine with the formation of the corresponding pyrimidine base and ribose-1-phosphate. In Bacillus subtilis (strain 168), this protein is Pyrimidine-nucleoside phosphorylase.